The following is a 564-amino-acid chain: MSSRSKRQSHGSTRGKRESESRGSSGRIKKERDREKEPEAASSRGSPVRVKREAEPAAREVPAPALPVVRVKREREADEDSEPEREVRAKNGRVDSEDRRSRHCPYLDTINRSVLDFDFEKLCSISLSHINAYACLVCGKYFQGRGLKSHAYIHSVQFSHHVFLNLHTLKFYCLPDNYEIIDSSLEDITYVLKPTFTKQQIANLDKQAKLSRAYDGTTYLPGIVGLNNIKANDYANAVLQALSNVPPLRNYFLEEDNYKNIKRPPGDIMFLLVQRFGELMRKLWNPRNFKAHVSPHEMLQAVVLCSKKTFQITKQGDGVDFLSWFLNALHSALGGTKKKKKTIVNDVFQGSMRIFTKKLPHPDLPAEEKEQLLHNDEYQETMVESTFMYLTLDLPTAPLYKDEKEQLIIPQVPLFNILAKFNGITEKEYKTYKENFLKRFQLTKLPPYLIFCIKRFTKNNFFVEKNPTIVNFPITNVDLREYLSEEVQAVHKNTTYDLIANIVHDGKPSEGSYRIHVLHHGTGKWYELQDLQVTDILPQMITLSEAYIQIWKRRDNDETNQQGA.

A disordered region spans residues 1–96 (MSSRSKRQSH…VRAKNGRVDS (96 aa)). Positions 28–39 (IKKERDREKEPE) are enriched in basic and acidic residues. Serine 46 carries the post-translational modification Phosphoserine. A Glycyl lysine isopeptide (Lys-Gly) (interchain with G-Cter in SUMO2) cross-link involves residue lysine 51. Low complexity predominate over residues 59 to 69 (REVPAPALPVV). A Phosphoserine modification is found at serine 81. Residues 84-96 (EREVRAKNGRVDS) are compositionally biased toward basic and acidic residues. The UBP-type; degenerate zinc finger occupies 102-199 (RHCPYLDTIN…YVLKPTFTKQ (98 aa)). Zn(2+) is bound by residues cysteine 135, cysteine 138, histidine 154, and histidine 160. The USP domain occupies 224–554 (VGLNNIKAND…EAYIQIWKRR (331 aa)).

Belongs to the peptidase C19 family. As to quaternary structure, the U4/U6-U5 tri-snRNP complex is a building block of the precatalytic spliceosome (spliceosome B complex). Component of the U4/U6-U5 tri-snRNP complex composed of the U4, U6 and U5 snRNAs and at least PRPF3, PRPF4, PRPF6, PRPF8, PRPF31, SNRNP200, TXNL4A, SNRNP40, SNRPB, SNRPD1, SNRPD2, SNRPD3, SNRPE, SNRPF, SNRPG, DDX23, CD2BP2, PPIH, SNU13, EFTUD2, SART1 and USP39, plus LSM2, LSM3, LSM4, LSM5, LSM6, LSM7 and LSM8.

Its subcellular location is the nucleus. It catalyses the reaction Thiol-dependent hydrolysis of ester, thioester, amide, peptide and isopeptide bonds formed by the C-terminal Gly of ubiquitin (a 76-residue protein attached to proteins as an intracellular targeting signal).. In terms of biological role, deubiquitinating enzyme that plays a role in many cellular processes including cellular antiviral response, epithelial morphogenesis, DNA repair or B-cell development. Plays a role in pre-mRNA splicing as a component of the U4/U6-U5 tri-snRNP, one of the building blocks of the precatalytic spliceosome. Specifically regulates immunoglobulin gene rearrangement in a spliceosome-dependent manner, which involves modulating chromatin interactions at the Igh locus and therefore plays an essential role in B-cell development. Regulates AURKB mRNA levels, and thereby plays a role in cytokinesis and in the spindle checkpoint. Regulates apoptosis and G2/M cell cycle checkpoint in response to DNA damage by deubiquitinating and stabilizing CHK2. Also plays an important role in DNA repair by controlling the recruitment of XRCC4/LIG4 to DNA double-strand breaks for non-homologous end-joining repair. Participates in antiviral activity by affecting the type I IFN signaling by stabilizing STAT1 and decreasing its 'Lys-6'-linked ubiquitination. Contributes to non-canonical Wnt signaling during epidermal differentiation. Acts as a negative regulator NF-kappa-B activation through deubiquitination of 'Lys-48'-linked ubiquitination of NFKBIA. The sequence is that of Ubiquitin carboxyl-terminal hydrolase 39 from Mus musculus (Mouse).